The chain runs to 442 residues: Glutamyl-tRNA reductase (442 aa).

Residues 50–53 (TCNR), serine 109, 114–116 (EPQ), and glutamine 120 each bind substrate. Cysteine 51 (nucleophile) is an active-site residue. An NADP(+)-binding site is contributed by 189-194 (GAGEMA).

It belongs to the glutamyl-tRNA reductase family. In terms of assembly, homodimer.

It catalyses the reaction (S)-4-amino-5-oxopentanoate + tRNA(Glu) + NADP(+) = L-glutamyl-tRNA(Glu) + NADPH + H(+). The protein operates within porphyrin-containing compound metabolism; protoporphyrin-IX biosynthesis; 5-aminolevulinate from L-glutamyl-tRNA(Glu): step 1/2. Functionally, catalyzes the NADPH-dependent reduction of glutamyl-tRNA(Glu) to glutamate 1-semialdehyde (GSA). The polypeptide is Glutamyl-tRNA reductase (Nitratidesulfovibrio vulgaris (strain DSM 19637 / Miyazaki F) (Desulfovibrio vulgaris)).